The sequence spans 542 residues: Monocarboxylate transporter 3 (542 aa).

The Cytoplasmic segment spans residues 1–19 (MGRADPEEGQLPAPVKPPD). Residues 20–40 (GGWGWIVLFGCFVITGFSYAF) form a helical membrane-spanning segment. Residues 41–63 (PKAVSVYFKELMKDFHVGYSDTA) are Extracellular-facing. The helical transmembrane segment at 64-84 (WISSIMLAMLYGTGPVCSIMV) threads the bilayer. The Cytoplasmic portion of the chain corresponds to 85–93 (NQFGCRPVM). The chain crosses the membrane as a helical span at residues 94 to 114 (LIGGLLASSGMILASFTTNII). Residues 115-119 (ELYLT) lie on the Extracellular side of the membrane. Residues 120–140 (AGVLTGLGMALNFQPSLIMLG) traverse the membrane as a helical segment. At 141–152 (TYFDKRRPLANG) the chain is on the cytoplasmic side. The helical transmembrane segment at 153–173 (LAAAGSPVFLSSLSPLGQVLL) threads the bilayer. Residues 174-181 (EKFGWRGG) are Extracellular-facing. The chain crosses the membrane as a helical span at residues 182-202 (FLIMGGLLLNCCTCGAVMRPL). Over 203-265 (DAGMKRKTEK…LDFSIFSNRG (63 aa)) the chain is Cytoplasmic. The segment at 226–247 (GGKSEEGISTTDGTKKTKKAKK) is disordered. Residues 266–286 (FIIYTISKFILVLGLFVPPIL) traverse the membrane as a helical segment. At 287–301 (LVNYAKDTGVPDTEA) the chain is on the extracellular side. A helical transmembrane segment spans residues 302 to 322 (AFLLSIIGFIDIFARPACGMV). Over 323-330 (AGLKWVRP) the chain is Cytoplasmic. Residues 331–351 (HVAYLFSFAMLFNGLTDICSA) traverse the membrane as a helical segment. Residues 352 to 357 (RASNYT) are Extracellular-facing. The chain crosses the membrane as a helical span at residues 358–378 (GLVIFCVFFGISYGMVGALQF). The Cytoplasmic portion of the chain corresponds to 379-392 (EVLMAIVGSQKFSS). The helical transmembrane segment at 393-413 (AIGLVLLIEAFAVLIGPPSAG) threads the bilayer. Residues 414-423 (RLVDALKNYE) are Extracellular-facing. The helical transmembrane segment at 424-444 (VIFYLAGSEVVLSALFLAMAT) threads the bilayer. The Cytoplasmic segment spans residues 445–542 (YCCLNRGKKT…ADQTVERDSF (98 aa)). Positions 453–542 (KTPPPEKNPS…ADQTVERDSF (90 aa)) are disordered. 2 basolateral sorting signal regions span residues 465-510 (GGSD…VEDE) and 511-532 (QSGE…AGCN). The span at 468–478 (DTEEAESDVQE) shows a compositional bias: acidic residues.

It belongs to the major facilitator superfamily. Monocarboxylate porter (TC 2.A.1.13) family. In terms of tissue distribution, retinal pigment epithelium.

Its subcellular location is the basolateral cell membrane. It carries out the reaction (S)-lactate(in) + H(+)(in) = (S)-lactate(out) + H(+)(out). Functionally, probable retinal pigment epithelium (RPE)-specific proton-coupled L-lactate transporter. May facilitate transport of lactate and H(+) out of the retina and could therefore play a role in pH and ion homeostasis of the outer retina. This Gallus gallus (Chicken) protein is Monocarboxylate transporter 3 (SLC16A8).